We begin with the raw amino-acid sequence, 193 residues long: Segregation and condensation protein B (193 aa).

It belongs to the ScpB family. As to quaternary structure, homodimer. Homodimerization may be required to stabilize the binding of ScpA to the Smc head domains. Component of a cohesin-like complex composed of ScpA, ScpB and the Smc homodimer, in which ScpA and ScpB bind to the head domain of Smc. The presence of the three proteins is required for the association of the complex with DNA.

It is found in the cytoplasm. Functionally, participates in chromosomal partition during cell division. May act via the formation of a condensin-like complex containing Smc and ScpA that pull DNA away from mid-cell into both cell halves. The protein is Segregation and condensation protein B of Clostridium botulinum (strain Kyoto / Type A2).